A 258-amino-acid chain; its full sequence is Snake venom serine protease PA (258 aa).

The N-terminal stretch at 1 to 18 (MVLIRVLANLLILQLSYA) is a signal peptide. A propeptide spanning residues 19–24 (QKSPEL) is cleaved from the precursor. The region spanning 25–249 (VVGGDECNIN…YNDWIKSIIA (225 aa)) is the Peptidase S1 domain. 6 disulfides stabilise this stretch: Cys-31/Cys-163, Cys-50/Cys-66, Cys-98/Cys-256, Cys-142/Cys-210, Cys-174/Cys-189, and Cys-200/Cys-225. The N-linked (GlcNAc...) asparagine glycan is linked to Asn-44. Residues His-65 and Asp-110 each act as charge relay system in the active site. The Charge relay system role is filled by Ser-204.

It belongs to the peptidase S1 family. Snake venom subfamily. In terms of assembly, monomer. Expressed by the venom gland.

It is found in the secreted. Its function is as follows. Snake venom serine protease that may act in the hemostasis system of the prey. This Trimeresurus stejnegeri (Chinese green tree viper) protein is Snake venom serine protease PA.